Consider the following 306-residue polypeptide: tRNA dimethylallyltransferase 2 (306 aa).

11–18 is a binding site for ATP; that stretch reads GPTASGKT. 13–18 provides a ligand contact to substrate; the sequence is TASGKT. An interaction with substrate tRNA region spans residues 36–39; it reads DSRQ.

This sequence belongs to the IPP transferase family. In terms of assembly, monomer. Requires Mg(2+) as cofactor.

It carries out the reaction adenosine(37) in tRNA + dimethylallyl diphosphate = N(6)-dimethylallyladenosine(37) in tRNA + diphosphate. Functionally, catalyzes the transfer of a dimethylallyl group onto the adenine at position 37 in tRNAs that read codons beginning with uridine, leading to the formation of N6-(dimethylallyl)adenosine (i(6)A). The sequence is that of tRNA dimethylallyltransferase 2 from Bacteroides fragilis (strain ATCC 25285 / DSM 2151 / CCUG 4856 / JCM 11019 / LMG 10263 / NCTC 9343 / Onslow / VPI 2553 / EN-2).